Consider the following 379-residue polypeptide: Probable G-protein coupled receptor 27 (379 aa).

Topologically, residues methionine 1–alanine 26 are extracellular. The N-linked (GlcNAc...) asparagine glycan is linked to asparagine 3. A helical membrane pass occupies residues threonine 27–valine 47. Residues arginine 48–tyrosine 58 lie on the Cytoplasmic side of the membrane. The helical transmembrane segment at leucine 59 to methionine 79 threads the bilayer. Residues leucine 80–leucine 100 are Extracellular-facing. Cysteines 98 and 175 form a disulfide. The helical transmembrane segment at leucine 101–valine 121 threads the bilayer. Residues threonine 122–cysteine 142 are Cytoplasmic-facing. Residues alanine 143–leucine 163 traverse the membrane as a helical segment. Residues aspartate 164–proline 185 are Extracellular-facing. A helical transmembrane segment spans residues glycine 186–leucine 206. Residues arginine 207 to methionine 289 are Cytoplasmic-facing. A helical membrane pass occupies residues phenylalanine 290–leucine 310. Over arginine 311–leucine 324 the chain is Extracellular. A helical transmembrane segment spans residues threonine 325–phenylalanine 345. Residues asparagine 346–leucine 379 are Cytoplasmic-facing.

This sequence belongs to the G-protein coupled receptor 1 family.

Its subcellular location is the cell membrane. Functionally, orphan receptor. Possible candidate for amine-like G-protein coupled receptor. The chain is Probable G-protein coupled receptor 27 (Gpr27) from Mus musculus (Mouse).